We begin with the raw amino-acid sequence, 161 residues long: DNA-directed RNA polymerase 18 kDa subunit (161 aa).

Belongs to the poxviridae DNA-directed RNA polymerase 18 kDa subunit family. The DNA-dependent RNA polymerase used for intermediate and late genes expression consists of eight subunits Rpo30/OPG66, Rpo7/OPG90, Rpo22/OPG103, Rpo147/OPG105, Rpo18/OPG119, Rpo19/OPG131, Rpo132/OPG151 and Rpo35/OPG156. The same holoenzyme, with the addition of the transcription-specificity factor OPG109, is used for early gene expression. Post-translationally, apparently non-glycosylated.

It localises to the virion. It catalyses the reaction RNA(n) + a ribonucleoside 5'-triphosphate = RNA(n+1) + diphosphate. Functionally, part of the DNA-dependent RNA polymerase which catalyzes the transcription of viral DNA into RNA using the four ribonucleoside triphosphates as substrates. Responsible for the transcription of early, intermediate and late genes. DNA-dependent RNA polymerase associates with the early transcription factor (ETF), itself composed of OPG118 and OPG133, thereby allowing the early genes transcription. Late transcription, and probably also intermediate transcription, require newly synthesized RNA polymerase. This Cynomys gunnisoni (Gunnison's prairie dog) protein is DNA-directed RNA polymerase 18 kDa subunit (OPG119).